Consider the following 272-residue polypeptide: Aquaporin-11 (272 aa).

Residues methionine 1–threonine 14 lie on the Cytoplasmic side of the membrane. The helical transmembrane segment at cysteine 15–alanine 35 threads the bilayer. Topologically, residues arginine 36–alanine 47 are lumenal. A helical membrane pass occupies residues phenylalanine 48–leucine 68. Topologically, residues serine 69–histidine 75 are cytoplasmic. The chain crosses the membrane as a helical span at residues proline 76 to glycine 96. Residues threonine 97–alanine 167 lie on the Lumenal side of the membrane. Positions asparagine 100–cysteine 102 match the NPC motif. Residues valine 168–valine 188 traverse the membrane as a helical segment. At arginine 189–histidine 195 the chain is on the cytoplasmic side. A helical transmembrane segment spans residues leucine 196–phenylalanine 216. Positions asparagine 217 to alanine 219 match the NPA motif. Residues asparagine 217–glutamine 235 are Lumenal-facing. A helical transmembrane segment spans residues phenylalanine 236–serine 256. At phenylalanine 257 to glutamate 272 the chain is on the cytoplasmic side.

Belongs to the MIP/aquaporin (TC 1.A.8) family. AQP11/AQP12 subfamily. In terms of assembly, homodimer; disulfide-linked. Homotetramer. Can also form homomultimer. Not glycosylated. In terms of tissue distribution, expressed in retina specifically at retinal Mueller glial cells.

It is found in the endoplasmic reticulum membrane. The protein resides in the cytoplasmic vesicle membrane. Its subcellular location is the cell membrane. It carries out the reaction H2O(in) = H2O(out). It catalyses the reaction glycerol(in) = glycerol(out). The enzyme catalyses H2O2(out) = H2O2(in). Its function is as follows. Channel protein that facilitates the transport of water, glycerol and hydrogen peroxide across membrane of cell or organelles guaranteeing intracellular homeostasis in several organes like liver, kidney and brain. In situation of stress, participates in endoplasmic reticulum (ER) homeostasis by regulating redox homeostasis through the transport of hydrogen peroxide across the endoplasmic reticulum membrane thereby regulating the oxidative stress through the NADPH oxidase 2 pathway. Plays a role by maintaining an environment suitable for translation or protein foldings in the ER lumen namely by participating in the PKD1 glycosylation processing resulting in regulation of PKD1 membrane trafficking thereby preventing the accumulation of unfolding protein in ER. Plays a role in the proximal tubule function by regulating its endosomal acidification. May play a role in postnatal kidney development. The chain is Aquaporin-11 from Equus caballus (Horse).